We begin with the raw amino-acid sequence, 121 residues long: Large ribosomal subunit protein bL31 (121 aa).

The large ribosomal subunit protein bL31 stretch occupies residues Met-1–Ala-97. The Zn(2+) site is built by Cys-16, Cys-18, Cys-36, and Cys-39. The segment covering Ala-65–Glu-80 has biased composition (low complexity). Residues Ala-65–Glu-121 form a disordered region. Residues Lys-74–Glu-121 are unknown. The segment covering Pro-81–Ala-93 has biased composition (basic and acidic residues). The span at Ala-107 to Glu-121 shows a compositional bias: low complexity.

Belongs to the bacterial ribosomal protein bL31 family. Type A subfamily. As to quaternary structure, part of the 50S ribosomal subunit. Requires Zn(2+) as cofactor.

Binds the 23S rRNA. The polypeptide is Large ribosomal subunit protein bL31 (Anaeromyxobacter dehalogenans (strain 2CP-C)).